Reading from the N-terminus, the 315-residue chain is Aspartate carbamoyltransferase catalytic subunit (315 aa).

Carbamoyl phosphate is bound by residues R55 and T56. L-aspartate is bound at residue K83. Residues R105, H138, and Q141 each coordinate carbamoyl phosphate. L-aspartate contacts are provided by R171 and R225. Carbamoyl phosphate contacts are provided by G266 and P267.

The protein belongs to the aspartate/ornithine carbamoyltransferase superfamily. ATCase family. As to quaternary structure, heterododecamer (2C3:3R2) of six catalytic PyrB chains organized as two trimers (C3), and six regulatory PyrI chains organized as three dimers (R2).

The catalysed reaction is carbamoyl phosphate + L-aspartate = N-carbamoyl-L-aspartate + phosphate + H(+). It functions in the pathway pyrimidine metabolism; UMP biosynthesis via de novo pathway; (S)-dihydroorotate from bicarbonate: step 2/3. In terms of biological role, catalyzes the condensation of carbamoyl phosphate and aspartate to form carbamoyl aspartate and inorganic phosphate, the committed step in the de novo pyrimidine nucleotide biosynthesis pathway. This is Aspartate carbamoyltransferase catalytic subunit from Mycolicibacterium gilvum (strain PYR-GCK) (Mycobacterium gilvum (strain PYR-GCK)).